Reading from the N-terminus, the 359-residue chain is Aminomethyltransferase (359 aa).

Belongs to the GcvT family. The glycine cleavage system is composed of four proteins: P, T, L and H.

It carries out the reaction N(6)-[(R)-S(8)-aminomethyldihydrolipoyl]-L-lysyl-[protein] + (6S)-5,6,7,8-tetrahydrofolate = N(6)-[(R)-dihydrolipoyl]-L-lysyl-[protein] + (6R)-5,10-methylene-5,6,7,8-tetrahydrofolate + NH4(+). The glycine cleavage system catalyzes the degradation of glycine. The protein is Aminomethyltransferase of Synechococcus sp. (strain RCC307).